A 348-amino-acid polypeptide reads, in one-letter code: Dihydroorotase (348 aa).

Zn(2+) contacts are provided by histidine 17 and histidine 19. Residues 19–21 and asparagine 45 each bind substrate; that span reads HLR. Zn(2+) is bound by residues lysine 103, histidine 140, and histidine 178. The residue at position 103 (lysine 103) is an N6-carboxylysine. Residue histidine 140 participates in substrate binding. Leucine 223 is a binding site for substrate. Aspartate 251 provides a ligand contact to Zn(2+). Aspartate 251 is a catalytic residue. Substrate-binding residues include histidine 255 and alanine 267.

Belongs to the metallo-dependent hydrolases superfamily. DHOase family. Class II DHOase subfamily. As to quaternary structure, homodimer. Requires Zn(2+) as cofactor.

The catalysed reaction is (S)-dihydroorotate + H2O = N-carbamoyl-L-aspartate + H(+). Its pathway is pyrimidine metabolism; UMP biosynthesis via de novo pathway; (S)-dihydroorotate from bicarbonate: step 3/3. Functionally, catalyzes the reversible cyclization of carbamoyl aspartate to dihydroorotate. In Shigella flexneri, this protein is Dihydroorotase.